The chain runs to 193 residues: Putative anthranilate synthase component II (193 aa).

The Glutamine amidotransferase type-1 domain occupies 2–193; that stretch reads KLLIINNHDS…WLAIPPTTNP (192 aa). Catalysis depends on residues C78, H168, and E170.

Tetramer of two components I and two components II.

The enzyme catalyses chorismate + L-glutamine = anthranilate + pyruvate + L-glutamate + H(+). The protein operates within amino-acid biosynthesis; L-tryptophan biosynthesis; L-tryptophan from chorismate: step 1/5. This chain is Putative anthranilate synthase component II, found in Haemophilus influenzae (strain ATCC 51907 / DSM 11121 / KW20 / Rd).